A 249-amino-acid polypeptide reads, in one-letter code: Isoamyl acetate-hydrolyzing esterase 1 homolog (249 aa).

Residue serine 24 is the Nucleophile of the active site. The residue at position 63 (lysine 63) is an N6-succinyllysine. Aspartate 197 acts as the Proton donor in catalysis. Histidine 200 (proton acceptor) is an active-site residue.

The protein belongs to the 'GDSL' lipolytic enzyme family. IAH1 subfamily.

Functionally, probable lipase. This chain is Isoamyl acetate-hydrolyzing esterase 1 homolog (Iah1), found in Mus musculus (Mouse).